The chain runs to 586 residues: Phosphomethylpyrimidine synthase (586 aa).

The segment at 1 to 59 (MKQSVSAEQIELKSSLPGSKKVYVDGPREGMKVPMREIEQSETNGVPNPPIRVYDTSGP) is disordered. Positions 22–39 (VYVDGPREGMKVPMREIE) are enriched in basic and acidic residues. Substrate is bound by residues asparagine 193, methionine 222, tyrosine 251, histidine 287, 307–309 (SRG), 348–351 (DGLR), and glutamate 387. A Zn(2+)-binding site is contributed by histidine 391. Residue tyrosine 414 participates in substrate binding. Residue histidine 455 coordinates Zn(2+). [4Fe-4S] cluster is bound by residues cysteine 535, cysteine 538, and cysteine 543.

It belongs to the ThiC family. [4Fe-4S] cluster serves as cofactor.

The catalysed reaction is 5-amino-1-(5-phospho-beta-D-ribosyl)imidazole + S-adenosyl-L-methionine = 4-amino-2-methyl-5-(phosphooxymethyl)pyrimidine + CO + 5'-deoxyadenosine + formate + L-methionine + 3 H(+). The protein operates within cofactor biosynthesis; thiamine diphosphate biosynthesis. Its function is as follows. Catalyzes the synthesis of the hydroxymethylpyrimidine phosphate (HMP-P) moiety of thiamine from aminoimidazole ribotide (AIR) in a radical S-adenosyl-L-methionine (SAM)-dependent reaction. This Bacillus cereus (strain ATCC 14579 / DSM 31 / CCUG 7414 / JCM 2152 / NBRC 15305 / NCIMB 9373 / NCTC 2599 / NRRL B-3711) protein is Phosphomethylpyrimidine synthase.